We begin with the raw amino-acid sequence, 506 residues long: GTPase Der (506 aa).

2 consecutive EngA-type G domains span residues 3-166 (PVVA…GEQL) and 218-391 (IKIA…ACAT). GTP contacts are provided by residues 9 to 16 (GRPNVGKS), 56 to 60 (DTGGI), 118 to 121 (NKTD), 224 to 231 (GRPNVGKS), 271 to 275 (DTAGV), and 336 to 339 (NKWD). A KH-like domain is found at 392–476 (QKNSTSMLTR…PIRIQFQEGN (85 aa)).

It belongs to the TRAFAC class TrmE-Era-EngA-EngB-Septin-like GTPase superfamily. EngA (Der) GTPase family. In terms of assembly, associates with the 50S ribosomal subunit.

GTPase that plays an essential role in the late steps of ribosome biogenesis. The protein is GTPase Der of Actinobacillus pleuropneumoniae serotype 7 (strain AP76).